Here is a 452-residue protein sequence, read N- to C-terminus: Prenyltransferase fsdK (452 aa).

Belongs to the tryptophan dimethylallyltransferase family.

It functions in the pathway mycotoxin biosynthesis. In terms of biological role, prenyltransferase; part of the gene cluster that mediates the biosynthesis of fusaridione A, a bright yellow trans-fused decalin-containing tetramic acid with antimicrobial activity. The PKS module of fsdS catalyzes the formation of the polyketide unit which is then conjugated to L-tyrosine by the condensation domain of the fsdS NRPS module. Activity of the Dieckmann cyclase domain (RED) results in release of the intermediate fusaridione A. The unstable pyrrolidinedione ring of fusaridione A is opened through a reverse-Dieckmann reaction to afford its ring-opened form. The polypeptide is Prenyltransferase fsdK (Fusarium heterosporum).